The sequence spans 151 residues: Large ribosomal subunit protein bL9 (151 aa).

This sequence belongs to the bacterial ribosomal protein bL9 family.

Binds to the 23S rRNA. This Nitrosomonas europaea (strain ATCC 19718 / CIP 103999 / KCTC 2705 / NBRC 14298) protein is Large ribosomal subunit protein bL9.